Consider the following 331-residue polypeptide: Ketol-acid reductoisomerase (NADP(+)) (331 aa).

The 181-residue stretch at 1 to 181 (MKMYYDADAD…GGTRAGVIET (181 aa)) folds into the KARI N-terminal Rossmann domain. Residues 24 to 27 (YGSQ), arginine 47, serine 50, and 82 to 85 (DEKQ) each bind NADP(+). The active site involves histidine 107. Residue glycine 133 coordinates NADP(+). Residues 182-327 (TFREETETDL…KKLRAMMPWL (146 aa)) enclose the KARI C-terminal knotted domain. 4 residues coordinate Mg(2+): aspartate 190, glutamate 194, glutamate 226, and glutamate 230. Residue serine 251 participates in substrate binding.

It belongs to the ketol-acid reductoisomerase family. Requires Mg(2+) as cofactor.

It carries out the reaction (2R)-2,3-dihydroxy-3-methylbutanoate + NADP(+) = (2S)-2-acetolactate + NADPH + H(+). The enzyme catalyses (2R,3R)-2,3-dihydroxy-3-methylpentanoate + NADP(+) = (S)-2-ethyl-2-hydroxy-3-oxobutanoate + NADPH + H(+). It participates in amino-acid biosynthesis; L-isoleucine biosynthesis; L-isoleucine from 2-oxobutanoate: step 2/4. Its pathway is amino-acid biosynthesis; L-valine biosynthesis; L-valine from pyruvate: step 2/4. Functionally, involved in the biosynthesis of branched-chain amino acids (BCAA). Catalyzes an alkyl-migration followed by a ketol-acid reduction of (S)-2-acetolactate (S2AL) to yield (R)-2,3-dihydroxy-isovalerate. In the isomerase reaction, S2AL is rearranged via a Mg-dependent methyl migration to produce 3-hydroxy-3-methyl-2-ketobutyrate (HMKB). In the reductase reaction, this 2-ketoacid undergoes a metal-dependent reduction by NADPH to yield (R)-2,3-dihydroxy-isovalerate. In Heliobacterium modesticaldum (strain ATCC 51547 / Ice1), this protein is Ketol-acid reductoisomerase (NADP(+)).